Consider the following 192-residue polypeptide: Virion infectivity factor (192 aa).

The tract at residues 14–17 is interaction with host APOBEC3F; F1-box; sequence DRMR. Residues 40–44 form an interaction with host APOBEC3G; G-box region; sequence YRHHF. Residues 54 to 72 are interaction with host APOBEC3F and APOBEC3G; FG-box; that stretch reads EVHIPLETAELVITTYWGL. An interaction with host APOBEC3F; F2-box region spans residues 74 to 79; the sequence is PGEREW. An RNA-binding region spans residues 75–114; that stretch reads GEREWHLGQGVSIEWRQGRYRTQIDPGLADQLIHIYYFDC. Threonine 96 is subject to Phosphothreonine; by host MAP4K1. Residues histidine 108, cysteine 114, cysteine 133, and histidine 139 each contribute to the Zn(2+) site. The HCCH motif motif lies at 108–139; that stretch reads HIYYFDCFSESAIRKAILGHKISPRCNYQAGH. Serine 144 carries the post-translational modification Phosphoserine; by host. A BC-box-like motif motif is present at residues 144 to 153; the sequence is SLQYLALTAL. The tract at residues 151 to 164 is multimerization; that stretch reads TALIAPKKTKPPLP. The tract at residues 151 to 180 is SOCS box-like; that stretch reads TALIAPKKTKPPLPSVQKLVEDRWNKPQKT. The disordered stretch occupies residues 164–192; it reads PSVQKLVEDRWNKPQKTRGHRESHTMNGH. The residue at position 165 (serine 165) is a Phosphoserine; by host MAP4K1. The segment at 171–172 is membrane association; the sequence is ED. A compositionally biased stretch (basic and acidic residues) spans 183-192; the sequence is HRESHTMNGH. Threonine 188 carries the phosphothreonine; by host modification.

Belongs to the primate lentivirus group Vif protein family. As to quaternary structure, homomultimer; in vitro and presumably in vivo. Interacts with viral RNA and Pr55Gag precursor; these interactions mediate Vif incorporation into the virion. Interacts with the viral reverse transcriptase. Forms cullin-5-RING E3 ubiquitin-protein ligase complex (ECS complex) by interacting with host CUL5, RBX2, elongin BC complex (ELOB and ELOC) and CBFB/CBF-beta. Within the ECS complex, Vif interacts directly with host CUL5, ELOC and APOBEC (APOBEC3F and APOBEC3G) substrates. The ECS complex also contains some single-stranded RNA (ssRNA) that acts as a glue that bridges Vif with APOBEC (APOBEC3F and APOBEC3G) substrates. Interacts with host UBCE7IP1 isoform 3/ZIN and possibly with SAT. Interacts with host tyrosine kinases HCK and FYN; these interactions may decrease level of phosphorylated APOBEC3G incorporation into virions. Interacts with host ABCE1; this interaction may play a role in protecting viral RNA from damage during viral assembly. Interacts with host MDM2; this interaction targets Vif for degradation by the proteasome. In terms of processing, processed in virion by the viral protease. Post-translationally, highly phosphorylated on serine and threonine residues. Polyubiquitinated and degraded by the proteasome in the presence of APOBEC3G.

It localises to the host cytoplasm. The protein localises to the host cell membrane. It is found in the virion. Functionally, counteracts the innate antiviral activity of host APOBEC3F and APOBEC3G by promoting their ubiquitination and degradation. Acts as a substrate recognition component of an E3 ubiquitin-protein ligase complex: mechanistically, Vif hijacks a host cullin-5-RING E3 ubiquitin-protein ligase complex (ECS complex) and the transcription coactivator CBFB/CBF-beta to form an active E3 ubiquitin-protein ligase complex that targets APOBEC3G and APOBEC3F for polyubiquitination, leading to their degradation by the proteasome. Vif interaction with APOBEC3G also blocks its cytidine deaminase activity in a proteasome-independent manner, suggesting a dual inhibitory mechanism. May interact directly with APOBEC3G mRNA in order to inhibit its translation. Association with CBFB/CBF-beta also inhibits the transcription coactivator activity of CBFB/CBF-beta. Seems to play a role in viral morphology by affecting the stability of the viral nucleoprotein core. Finally, Vif also contributes to the G2 cell cycle arrest observed in HIV infected cells. The protein is Virion infectivity factor of Homo sapiens (Human).